The sequence spans 200 residues: Pyridoxal 5'-phosphate synthase subunit PdxT (200 aa).

46-48 (GES) serves as a coordination point for L-glutamine. Catalysis depends on cysteine 78, which acts as the Nucleophile. Residues arginine 107 and 138 to 139 (IR) contribute to the L-glutamine site. Residues histidine 175 and glutamate 177 each act as charge relay system in the active site.

It belongs to the glutaminase PdxT/SNO family. As to quaternary structure, in the presence of PdxS, forms a dodecamer of heterodimers. Only shows activity in the heterodimer.

The catalysed reaction is aldehydo-D-ribose 5-phosphate + D-glyceraldehyde 3-phosphate + L-glutamine = pyridoxal 5'-phosphate + L-glutamate + phosphate + 3 H2O + H(+). It catalyses the reaction L-glutamine + H2O = L-glutamate + NH4(+). It functions in the pathway cofactor biosynthesis; pyridoxal 5'-phosphate biosynthesis. Functionally, catalyzes the hydrolysis of glutamine to glutamate and ammonia as part of the biosynthesis of pyridoxal 5'-phosphate. The resulting ammonia molecule is channeled to the active site of PdxS. This Corynebacterium glutamicum (strain R) protein is Pyridoxal 5'-phosphate synthase subunit PdxT.